Reading from the N-terminus, the 449-residue chain is Methionine aminopeptidase 2 (449 aa).

Residues 1–91 (MAAQAAPELA…PRIPLTTLFP (91 aa)) are disordered. Acidic residues predominate over residues 34–50 (EEAENEGDSEDDRDDEQ). A compositionally biased stretch (basic residues) spans 61 to 75 (KKKKKKRPKKKKKTA). Substrate is bound at residue H199. D219, D230, and H299 together coordinate a divalent metal cation. Position 307 (H307) interacts with substrate. A divalent metal cation contacts are provided by E335 and E430.

The protein belongs to the peptidase M24A family. Methionine aminopeptidase eukaryotic type 2 subfamily. Co(2+) serves as cofactor. Zn(2+) is required as a cofactor. The cofactor is Mn(2+). It depends on Fe(2+) as a cofactor.

The protein localises to the cytoplasm. It catalyses the reaction Release of N-terminal amino acids, preferentially methionine, from peptides and arylamides.. In terms of biological role, cotranslationally removes the N-terminal methionine from nascent proteins. The N-terminal methionine is often cleaved when the second residue in the primary sequence is small and uncharged (Met-Ala-, Cys, Gly, Pro, Ser, Thr, or Val). The sequence is that of Methionine aminopeptidase 2 from Trichophyton verrucosum (strain HKI 0517).